The sequence spans 432 residues: Short/branched chain specific acyl-CoA dehydrogenase, mitochondrial (432 aa).

The transit peptide at Met-1–Ser-33 directs the protein to the mitochondrion. Lys-70 carries the post-translational modification N6-acetyllysine; alternate. The residue at position 70 (Lys-70) is an N6-succinyllysine; alternate. Residues Phe-174 to Ser-183 and Trp-207 to Ser-209 each bind FAD. A substrate-binding site is contributed by Ser-183. Phosphoserine is present on Ser-183. Substrate contacts are provided by Tyr-229 and Tyr-283. At Lys-284 the chain carries N6-acetyllysine; alternate. Lys-284 is modified (N6-succinyllysine; alternate). Position 291–294 (Asn-291–Arg-294) interacts with substrate. FAD contacts are provided by residues Arg-319, Gln-330, and Glu-387–Gly-391. Glu-414 serves as the catalytic Proton acceptor. Ala-416–Asn-418 is a binding site for FAD. Lys-426 bears the N6-acetyllysine mark.

This sequence belongs to the acyl-CoA dehydrogenase family. As to quaternary structure, homotetramer. FAD is required as a cofactor. In terms of tissue distribution, ubiquitously expressed.

It localises to the mitochondrion matrix. The enzyme catalyses 2-methylbutanoyl-CoA + oxidized [electron-transfer flavoprotein] + H(+) = (2E)-2-methylbut-2-enoyl-CoA + reduced [electron-transfer flavoprotein]. The catalysed reaction is (2S)-2-methylbutanoyl-CoA + oxidized [electron-transfer flavoprotein] + H(+) = (2E)-2-methylbut-2-enoyl-CoA + reduced [electron-transfer flavoprotein]. It catalyses the reaction (2R)-2-methylbutanoyl-CoA + oxidized [electron-transfer flavoprotein] + H(+) = ethylacryloyl-CoA + reduced [electron-transfer flavoprotein]. It carries out the reaction butanoyl-CoA + oxidized [electron-transfer flavoprotein] + H(+) = (2E)-butenoyl-CoA + reduced [electron-transfer flavoprotein]. The enzyme catalyses 2-methylpropanoyl-CoA + oxidized [electron-transfer flavoprotein] + H(+) = 2-methylpropenoyl-CoA + reduced [electron-transfer flavoprotein]. The catalysed reaction is hexanoyl-CoA + oxidized [electron-transfer flavoprotein] + H(+) = (2E)-hexenoyl-CoA + reduced [electron-transfer flavoprotein]. It catalyses the reaction 2-methylhexanoyl-CoA + oxidized [electron-transfer flavoprotein] + H(+) = 2-methylhexenoyl-CoA + reduced [electron-transfer flavoprotein]. It carries out the reaction valproyl-CoA + oxidized [electron-transfer flavoprotein] + H(+) = (2E)-2-propylpent-2-enoyl-CoA + reduced [electron-transfer flavoprotein]. Its pathway is lipid metabolism; mitochondrial fatty acid beta-oxidation. It participates in amino-acid degradation; L-isoleucine degradation. Competitively inhibited by valproyl-CoA. Functionally, short and branched chain specific acyl-CoA dehydrogenase that catalyzes the removal of one hydrogen from C-2 and C-3 of the fatty acyl-CoA thioester, resulting in the formation of trans-2-enoyl-CoA. Among the different mitochondrial acyl-CoA dehydrogenases, acts specifically on short and branched chain acyl-CoA derivatives such as (S)-2-methylbutyryl-CoA as well as short straight chain acyl-CoAs such as butyryl-CoA. Plays an important role in the metabolism of L-isoleucine by catalyzing the dehydrogenation of 2-methylbutyryl-CoA, one of the steps of the L-isoleucine catabolic pathway. Can also act on valproyl-CoA, a metabolite of valproic acid, an antiepileptic drug. In Homo sapiens (Human), this protein is Short/branched chain specific acyl-CoA dehydrogenase, mitochondrial.